The chain runs to 122 residues: MIQMQTNLDVADNSGARRVMCIKVLGGSKRRYASVGDIIVVSIKEAIPRGRVKKGDVMKAVVVRTAKDIRRPDGSVIRFDNNAAVLIDNKKEPIGTRIFGPVPRELRAKNHMKIISLAPEVL.

It belongs to the universal ribosomal protein uL14 family. As to quaternary structure, part of the 50S ribosomal subunit. Forms a cluster with proteins L3 and L19. In the 70S ribosome, L14 and L19 interact and together make contacts with the 16S rRNA in bridges B5 and B8.

Functionally, binds to 23S rRNA. Forms part of two intersubunit bridges in the 70S ribosome. The sequence is that of Large ribosomal subunit protein uL14 from Brucella anthropi (strain ATCC 49188 / DSM 6882 / CCUG 24695 / JCM 21032 / LMG 3331 / NBRC 15819 / NCTC 12168 / Alc 37) (Ochrobactrum anthropi).